The following is a 157-amino-acid chain: Probable succinate transporter subunit YjjB (157 aa).

A run of 4 helical transmembrane segments spans residues 2-22 (GIISFIFALAEDMLLAAIPAV), 55-75 (AGFNIEWATFLAALLVGSIGI), 87-107 (IFTVAAVIPMFPGISAYTAMI), and 129-149 (FLKASSIVGALSIGLSIPGLW).

This sequence belongs to the ThrE exporter (TC 2.A.79) family. In terms of assembly, the transporter is composed of YjjB and YjjP.

It is found in the cell inner membrane. Its function is as follows. Involved in succinate export with YjjP. Both proteins are required for export. In Klebsiella pneumoniae (strain 342), this protein is Probable succinate transporter subunit YjjB.